Reading from the N-terminus, the 361-residue chain is S-adenosylmethionine:tRNA ribosyltransferase-isomerase (361 aa).

It belongs to the QueA family. As to quaternary structure, monomer.

The protein resides in the cytoplasm. The catalysed reaction is 7-aminomethyl-7-carbaguanosine(34) in tRNA + S-adenosyl-L-methionine = epoxyqueuosine(34) in tRNA + adenine + L-methionine + 2 H(+). The protein operates within tRNA modification; tRNA-queuosine biosynthesis. Transfers and isomerizes the ribose moiety from AdoMet to the 7-aminomethyl group of 7-deazaguanine (preQ1-tRNA) to give epoxyqueuosine (oQ-tRNA). The sequence is that of S-adenosylmethionine:tRNA ribosyltransferase-isomerase from Actinobacillus pleuropneumoniae serotype 3 (strain JL03).